The primary structure comprises 150 residues: Prolamin PPROL 14E (150 aa).

The N-terminal stretch at 1–19 (MKIIFVFALLAIAACSASA) is a signal peptide. Position 20 is a pyrrolidone carboxylic acid (Gln20).

It belongs to the prolamin family.

Its subcellular location is the vacuole. It is found in the aleurone grain. Its function is as follows. Seed storage protein; serves as a source of nitrogen, carbon and sulfur for the young developing seedling. The protein is Prolamin PPROL 14E of Oryza sativa subsp. indica (Rice).